We begin with the raw amino-acid sequence, 243 residues long: Phosphoribosyl isomerase A (243 aa).

Asp-10 functions as the Proton acceptor in the catalytic mechanism. The active-site Proton donor is the Asp-129.

The protein belongs to the HisA/HisF family.

Its subcellular location is the cytoplasm. It catalyses the reaction 1-(5-phospho-beta-D-ribosyl)-5-[(5-phospho-beta-D-ribosylamino)methylideneamino]imidazole-4-carboxamide = 5-[(5-phospho-1-deoxy-D-ribulos-1-ylimino)methylamino]-1-(5-phospho-beta-D-ribosyl)imidazole-4-carboxamide. The enzyme catalyses N-(5-phospho-beta-D-ribosyl)anthranilate = 1-(2-carboxyphenylamino)-1-deoxy-D-ribulose 5-phosphate. It participates in amino-acid biosynthesis; L-histidine biosynthesis; L-histidine from 5-phospho-alpha-D-ribose 1-diphosphate: step 4/9. It functions in the pathway amino-acid biosynthesis; L-tryptophan biosynthesis; L-tryptophan from chorismate: step 3/5. Functionally, involved in both the histidine and tryptophan biosynthetic pathways. This Mycobacteroides abscessus (strain ATCC 19977 / DSM 44196 / CCUG 20993 / CIP 104536 / JCM 13569 / NCTC 13031 / TMC 1543 / L948) (Mycobacterium abscessus) protein is Phosphoribosyl isomerase A.